The chain runs to 84 residues: Delta-conotoxin-like Bt6.4 (84 aa).

The first 22 residues, 1 to 22, serve as a signal peptide directing secretion; it reads MKLTCMVIVAVLFLTAWTSVMA. Residues 23–57 constitute a propeptide that is removed on maturation; the sequence is DGSINRPDIAEGWQKFFSKARDEMKNRAASELNKR. Cystine bridges form between Cys-58–Cys-74, Cys-65–Cys-78, and Cys-73–Cys-82.

Belongs to the conotoxin O1 superfamily. In terms of tissue distribution, expressed by the venom duct.

The protein localises to the secreted. Its function is as follows. This toxin activates voltage-gated sodium channels. It shifts the voltage-dependence of activation to more hyperpolarized potentials but has only little effect on channel inactivation. It is active on Nav1.3/SCN3A (EC(50)=3.98 nM), Nav1.4/SCN4A (EC(50)=4.99 nM), Nav1.6/SCN8A (EC(50)=1.27 nM) and Nav1.7/SCN9A (EC(50)=2.42 nM) voltage-gated sodium channels. In vivo, it induces nocifensive or pain-like behaviors in mice when injected intraplantarly. This is Delta-conotoxin-like Bt6.4 from Conus betulinus (Beech cone).